We begin with the raw amino-acid sequence, 257 residues long: Imidazole glycerol phosphate synthase subunit HisF (257 aa).

Active-site residues include aspartate 12 and aspartate 131.

This sequence belongs to the HisA/HisF family. Heterodimer of HisH and HisF.

The protein resides in the cytoplasm. It catalyses the reaction 5-[(5-phospho-1-deoxy-D-ribulos-1-ylimino)methylamino]-1-(5-phospho-beta-D-ribosyl)imidazole-4-carboxamide + L-glutamine = D-erythro-1-(imidazol-4-yl)glycerol 3-phosphate + 5-amino-1-(5-phospho-beta-D-ribosyl)imidazole-4-carboxamide + L-glutamate + H(+). The protein operates within amino-acid biosynthesis; L-histidine biosynthesis; L-histidine from 5-phospho-alpha-D-ribose 1-diphosphate: step 5/9. Its function is as follows. IGPS catalyzes the conversion of PRFAR and glutamine to IGP, AICAR and glutamate. The HisF subunit catalyzes the cyclization activity that produces IGP and AICAR from PRFAR using the ammonia provided by the HisH subunit. This Burkholderia ambifaria (strain MC40-6) protein is Imidazole glycerol phosphate synthase subunit HisF.